Here is a 284-residue protein sequence, read N- to C-terminus: D-tagatose-1,6-bisphosphate aldolase subunit GatY (284 aa).

The active-site Proton donor is aspartate 82. Zn(2+) is bound by residues histidine 83 and histidine 180. A dihydroxyacetone phosphate-binding site is contributed by glycine 181. Histidine 208 is a Zn(2+) binding site. Dihydroxyacetone phosphate contacts are provided by residues 209-211 (GAS) and 230-233 (NVAT).

Belongs to the class II fructose-bisphosphate aldolase family. TagBP aldolase GatY subfamily. As to quaternary structure, forms a complex with GatZ. Zn(2+) serves as cofactor.

The catalysed reaction is D-tagatofuranose 1,6-bisphosphate = D-glyceraldehyde 3-phosphate + dihydroxyacetone phosphate. Its pathway is carbohydrate metabolism; D-tagatose 6-phosphate degradation; D-glyceraldehyde 3-phosphate and glycerone phosphate from D-tagatose 6-phosphate: step 2/2. Its function is as follows. Catalytic subunit of the tagatose-1,6-bisphosphate aldolase GatYZ, which catalyzes the reversible aldol condensation of dihydroxyacetone phosphate (DHAP or glycerone-phosphate) with glyceraldehyde 3-phosphate (G3P) to produce tagatose 1,6-bisphosphate (TBP). Requires GatZ subunit for full activity and stability. Is involved in the catabolism of galactitol. This is D-tagatose-1,6-bisphosphate aldolase subunit GatY from Shigella flexneri.